A 484-amino-acid polypeptide reads, in one-letter code: Aspartyl/glutamyl-tRNA(Asn/Gln) amidotransferase subunit B (484 aa).

This sequence belongs to the GatB/GatE family. GatB subfamily. Heterotrimer of A, B and C subunits.

The catalysed reaction is L-glutamyl-tRNA(Gln) + L-glutamine + ATP + H2O = L-glutaminyl-tRNA(Gln) + L-glutamate + ADP + phosphate + H(+). It carries out the reaction L-aspartyl-tRNA(Asn) + L-glutamine + ATP + H2O = L-asparaginyl-tRNA(Asn) + L-glutamate + ADP + phosphate + 2 H(+). Functionally, allows the formation of correctly charged Asn-tRNA(Asn) or Gln-tRNA(Gln) through the transamidation of misacylated Asp-tRNA(Asn) or Glu-tRNA(Gln) in organisms which lack either or both of asparaginyl-tRNA or glutaminyl-tRNA synthetases. The reaction takes place in the presence of glutamine and ATP through an activated phospho-Asp-tRNA(Asn) or phospho-Glu-tRNA(Gln). This Bordetella pertussis (strain Tohama I / ATCC BAA-589 / NCTC 13251) protein is Aspartyl/glutamyl-tRNA(Asn/Gln) amidotransferase subunit B.